A 385-amino-acid chain; its full sequence is ATP phosphoribosyltransferase regulatory subunit (385 aa).

Belongs to the class-II aminoacyl-tRNA synthetase family. HisZ subfamily. As to quaternary structure, heteromultimer composed of HisG and HisZ subunits.

Its subcellular location is the cytoplasm. It participates in amino-acid biosynthesis; L-histidine biosynthesis; L-histidine from 5-phospho-alpha-D-ribose 1-diphosphate: step 1/9. Functionally, required for the first step of histidine biosynthesis. May allow the feedback regulation of ATP phosphoribosyltransferase activity by histidine. The polypeptide is ATP phosphoribosyltransferase regulatory subunit (Bordetella parapertussis (strain 12822 / ATCC BAA-587 / NCTC 13253)).